A 479-amino-acid polypeptide reads, in one-letter code: Glutamyl-tRNA(Gln) amidotransferase subunit A (479 aa).

Residues K75 and S150 each act as charge relay system in the active site. S174 acts as the Acyl-ester intermediate in catalysis.

It belongs to the amidase family. GatA subfamily. In terms of assembly, heterotrimer of A, B and C subunits.

The catalysed reaction is L-glutamyl-tRNA(Gln) + L-glutamine + ATP + H2O = L-glutaminyl-tRNA(Gln) + L-glutamate + ADP + phosphate + H(+). Its function is as follows. Allows the formation of correctly charged Gln-tRNA(Gln) through the transamidation of misacylated Glu-tRNA(Gln) in organisms which lack glutaminyl-tRNA synthetase. The reaction takes place in the presence of glutamine and ATP through an activated gamma-phospho-Glu-tRNA(Gln). The polypeptide is Glutamyl-tRNA(Gln) amidotransferase subunit A (Synechococcus sp. (strain ATCC 27144 / PCC 6301 / SAUG 1402/1) (Anacystis nidulans)).